The chain runs to 141 residues: Small ribosomal subunit protein uS8c (141 aa).

It belongs to the universal ribosomal protein uS8 family. In terms of assembly, part of the 30S ribosomal subunit.

Its subcellular location is the plastid. It localises to the chloroplast. Its function is as follows. One of the primary rRNA binding proteins, it binds directly to 16S rRNA central domain where it helps coordinate assembly of the platform of the 30S subunit. The polypeptide is Small ribosomal subunit protein uS8c (rps8) (Pleurastrum terricola (Filamentous green alga)).